Consider the following 460-residue polypeptide: MISINLIKLTSITNGILYCSNYATLHSISIHSITTDTRKITPKCLFIALIGKNFDAHMFVNEAISKGAAALLLEKQCYPKNVIPQIIVQNTTIALGKIASWIRDQTNATVIAITGSSGKTSVKEMTSSILKNCGNTISTFQNLNNNIGVPLTLLNLNKSHKYAILELGANYPKDIEYTTKITKPNIALINNIYHSHLAGFKSLFGVAQAKQEIFLGLRKNGIAIYNKDSNYWSKWKKNLLTQKIINFSIKKNSTIFASNITTSNQGSKFKIHSPNGEIYVTLPLLGYHNISNALAAATIAISINIPLEIIKIGLSSLPILKNRLQIIRLNKYKTIINDTYNANTASMIVAIKILENISGYKLFVAGDMLELGKNDVLYHKIIGNTIYNSNINEVFSIGKLSKEISIASKKGHHFYNSDELLKNLKNKLLNKKIITILVKASRSEKLDVIVEQLIKEYHKA.

Residue 115 to 121 participates in ATP binding; sequence GSSGKTS.

Belongs to the MurCDEF family. MurF subfamily.

It localises to the cytoplasm. It carries out the reaction D-alanyl-D-alanine + UDP-N-acetyl-alpha-D-muramoyl-L-alanyl-gamma-D-glutamyl-meso-2,6-diaminopimelate + ATP = UDP-N-acetyl-alpha-D-muramoyl-L-alanyl-gamma-D-glutamyl-meso-2,6-diaminopimeloyl-D-alanyl-D-alanine + ADP + phosphate + H(+). The protein operates within cell wall biogenesis; peptidoglycan biosynthesis. Involved in cell wall formation. Catalyzes the final step in the synthesis of UDP-N-acetylmuramoyl-pentapeptide, the precursor of murein. The sequence is that of UDP-N-acetylmuramoyl-tripeptide--D-alanyl-D-alanine ligase from Buchnera aphidicola subsp. Baizongia pistaciae (strain Bp).